A 157-amino-acid chain; its full sequence is Cyclic pyranopterin monophosphate synthase (157 aa).

Substrate contacts are provided by residues 74 to 76 and 112 to 113; these read MCH and ME. The active site involves D127.

This sequence belongs to the MoaC family. Homohexamer; trimer of dimers.

The catalysed reaction is (8S)-3',8-cyclo-7,8-dihydroguanosine 5'-triphosphate = cyclic pyranopterin phosphate + diphosphate. It functions in the pathway cofactor biosynthesis; molybdopterin biosynthesis. Catalyzes the conversion of (8S)-3',8-cyclo-7,8-dihydroguanosine 5'-triphosphate to cyclic pyranopterin monophosphate (cPMP). The protein is Cyclic pyranopterin monophosphate synthase of Syntrophomonas wolfei subsp. wolfei (strain DSM 2245B / Goettingen).